The primary structure comprises 149 residues: Arginine repressor (149 aa).

Belongs to the ArgR family.

Its subcellular location is the cytoplasm. It functions in the pathway amino-acid biosynthesis; L-arginine biosynthesis [regulation]. Its function is as follows. Regulates arginine biosynthesis genes. The polypeptide is Arginine repressor (Exiguobacterium sibiricum (strain DSM 17290 / CCUG 55495 / CIP 109462 / JCM 13490 / 255-15)).